A 340-amino-acid chain; its full sequence is Putative Ig-like domain-containing protein C1 (340 aa).

Residues 207 to 294 (PTVTVTGIER…SSPRVMVPTI (88 aa)) form the Ig-like domain.

The protein is Putative Ig-like domain-containing protein C1 of Sus scrofa (Pig).